Consider the following 249-residue polypeptide: Probable transcriptional regulatory protein Dtur_1615 (249 aa).

It belongs to the TACO1 family.

The protein resides in the cytoplasm. The polypeptide is Probable transcriptional regulatory protein Dtur_1615 (Dictyoglomus turgidum (strain DSM 6724 / Z-1310)).